The primary structure comprises 357 residues: Protein-L-isoaspartate O-methyltransferase domain-containing protein 1 (357 aa).

Residue G2 is the site of N-myristoyl glycine attachment. S64 is an active-site residue. AdoMet binding motif regions lie at residues 85–94 (LNLGSGTGYL), 160–164 (YDRIY), and 181–191 (LKVGGILVMPI). Residues 240 to 250 (VRNLQDLARIY) form a BC-box region. The interval 299–333 (PLDSEEDEKMEEDNKEEEEKDHNEAMKPEEPPQNL) is disordered. Over residues 301–317 (DSEEDEKMEEDNKEEEE) the composition is skewed to acidic residues. Residues 318 to 333 (KDHNEAMKPEEPPQNL) show a composition bias toward basic and acidic residues. The tract at residues 341–344 (LPLP) is CUL-box.

It belongs to the methyltransferase superfamily. L-isoaspartyl/D-aspartyl protein methyltransferase family. In terms of assembly, component of the probable ECS(PCMTD1) E3 ubiquitin-protein ligase complex, at least composed of CUL5, ELOB, ELOC, RBX2 and PCMTD1. Interacts (via the BC-box) with ELOB and ELOC; the interaction is direct and stabilizes PCMTD1.

The protein resides in the cytoplasm. Its subcellular location is the membrane. Substrate recognition component of an ECS (Elongin BC-CUL5-SOCS-box protein) E3 ubiquitin ligase complex which mediates the ubiquitination and subsequent proteasomal degradation of target proteins. Specifically binds to the methyltransferase cofactor S-adenosylmethionine (AdoMet) via the N-terminal AdoMet binding motif, but does not display methyltransferase activity. May provide an alternate maintenance pathway for modified proteins by acting as a damage-specific E3 ubiquitin ligase adaptor protein. This is Protein-L-isoaspartate O-methyltransferase domain-containing protein 1 from Homo sapiens (Human).